The sequence spans 324 residues: MSTLSTKEPLAAIVGPTATGKSTIALKVAARLGAEIISVDSAQVYRGMDIGTAKLLPEERVGPDGRPIPHHLIDIVDPDEPFSVADYQKLARQTITAIIRRGHLPLLVGGTGLYYQAVVDPYRFTPEGGDPRVRQELEELAAKFGDAYLHEQLKRVDPEAAKRIHPHDRRRLVRALEVFKTTGQPISAALAWRRQQESPYHLAAVALSMPRPLLYRRIEARVDAMIAAGLIEEVSRLLARYDYRLPALQALGYKEIGAYLRKEIELEEAIAILKRNTRRLAKRQLTWFRRDRRLHWWEVDPDKIEEISAAIADFISRTIDINVE.

Position 15-22 (15-22 (GPTATGKS)) interacts with ATP. Position 17-22 (17-22 (TATGKS)) interacts with substrate. The segment at 40–43 (DSAQ) is interaction with substrate tRNA.

Belongs to the IPP transferase family. In terms of assembly, monomer. Requires Mg(2+) as cofactor.

The catalysed reaction is adenosine(37) in tRNA + dimethylallyl diphosphate = N(6)-dimethylallyladenosine(37) in tRNA + diphosphate. In terms of biological role, catalyzes the transfer of a dimethylallyl group onto the adenine at position 37 in tRNAs that read codons beginning with uridine, leading to the formation of N6-(dimethylallyl)adenosine (i(6)A). This Moorella thermoacetica (strain ATCC 39073 / JCM 9320) protein is tRNA dimethylallyltransferase.